Consider the following 493-residue polypeptide: Acetylcholine receptor subunit beta-type unc-29 (493 aa).

An N-terminal signal peptide occupies residues methionine 1–alanine 26. Asparagine 25 and asparagine 50 each carry an N-linked (GlcNAc...) asparagine glycan. Residues serine 27–phenylalanine 232 lie on the Extracellular side of the membrane. A disulfide bridge links cysteine 155 with cysteine 169. A run of 3 helical transmembrane segments spans residues tyrosine 233–leucine 254, isoleucine 262–serine 280, and tyrosine 296–valine 317. Residues tyrosine 318–arginine 445 are Cytoplasmic-facing. Residues leucine 446–alanine 466 form a helical membrane-spanning segment.

The protein belongs to the ligand-gated ion channel (TC 1.A.9) family. Acetylcholine receptor (TC 1.A.9.1) subfamily. In terms of assembly, interacts with lev-1. Component of nicotinic acetylcholine receptor composed of 2 non-alpha subunits lev-1 and unc-29, and 3 alpha subunits unc-38, unc-63 and lev-8. Interacts with oig-4. Interacts with crld-1.

It localises to the postsynaptic cell membrane. The protein localises to the cell membrane. Its function is as follows. Non-alpha subunit of nicotinic acetylcholine receptor (nAChR). Involved in nAChR sensitivity to nicotine and levasimole. The chain is Acetylcholine receptor subunit beta-type unc-29 from Caenorhabditis elegans.